The sequence spans 291 residues: Pantothenate synthetase (291 aa).

30–37 (MGYLHAGH) contacts ATP. Catalysis depends on histidine 37, which acts as the Proton donor. Position 61 (glutamine 61) interacts with (R)-pantoate. Glutamine 61 contacts beta-alanine. Residue 147-150 (GEKD) participates in ATP binding. Glutamine 153 provides a ligand contact to (R)-pantoate. ATP is bound by residues valine 176 and 184-187 (LSSR).

The protein belongs to the pantothenate synthetase family. As to quaternary structure, homodimer.

It localises to the cytoplasm. It carries out the reaction (R)-pantoate + beta-alanine + ATP = (R)-pantothenate + AMP + diphosphate + H(+). The protein operates within cofactor biosynthesis; (R)-pantothenate biosynthesis; (R)-pantothenate from (R)-pantoate and beta-alanine: step 1/1. Catalyzes the condensation of pantoate with beta-alanine in an ATP-dependent reaction via a pantoyl-adenylate intermediate. The sequence is that of Pantothenate synthetase from Rhizobium rhizogenes (strain K84 / ATCC BAA-868) (Agrobacterium radiobacter).